The following is a 492-amino-acid chain: N-succinylglutamate 5-semialdehyde dehydrogenase (492 aa).

Residue 220 to 225 participates in NAD(+) binding; sequence GSANTG. Residues E243 and C277 contribute to the active site.

The protein belongs to the aldehyde dehydrogenase family. AstD subfamily.

It carries out the reaction N-succinyl-L-glutamate 5-semialdehyde + NAD(+) + H2O = N-succinyl-L-glutamate + NADH + 2 H(+). Its pathway is amino-acid degradation; L-arginine degradation via AST pathway; L-glutamate and succinate from L-arginine: step 4/5. Functionally, catalyzes the NAD-dependent reduction of succinylglutamate semialdehyde into succinylglutamate. This Escherichia coli (strain ATCC 8739 / DSM 1576 / NBRC 3972 / NCIMB 8545 / WDCM 00012 / Crooks) protein is N-succinylglutamate 5-semialdehyde dehydrogenase.